An 83-amino-acid polypeptide reads, in one-letter code: Small ribosomal subunit protein bS16 (83 aa).

The protein belongs to the bacterial ribosomal protein bS16 family.

This Shewanella putrefaciens (strain CN-32 / ATCC BAA-453) protein is Small ribosomal subunit protein bS16.